Here is a 254-residue protein sequence, read N- to C-terminus: Type III pantothenate kinase (254 aa).

Position 6–13 (6–13 (DVGNTNTT)) interacts with ATP. Substrate is bound by residues Y100 and 107-110 (GADR). Catalysis depends on D109, which acts as the Proton acceptor. D129 is a binding site for K(+). T132 contributes to the ATP binding site. T184 provides a ligand contact to substrate.

This sequence belongs to the type III pantothenate kinase family. In terms of assembly, homodimer. NH4(+) is required as a cofactor. Requires K(+) as cofactor.

Its subcellular location is the cytoplasm. The enzyme catalyses (R)-pantothenate + ATP = (R)-4'-phosphopantothenate + ADP + H(+). The protein operates within cofactor biosynthesis; coenzyme A biosynthesis; CoA from (R)-pantothenate: step 1/5. Its function is as follows. Catalyzes the phosphorylation of pantothenate (Pan), the first step in CoA biosynthesis. In Anaeromyxobacter dehalogenans (strain 2CP-C), this protein is Type III pantothenate kinase.